The chain runs to 215 residues: MSSTEEKFSLKEVLVSFKSCLVDDDQDIIVEQYLNGWKGLVRFMNSLGTIFSFVSKDAVTKIQIMENYLAGTNGERYRTLQSMVEHELSSDLVDLTKRCNNPDSGCRTILRLHRALRWLQLFLEKLRTSNEDSKTSTLCTEAYNDSLANFHPWIIRKTATVAFLALPTRNTFFEVMNVGTTEEVVAMLGESMPYVTKVYDFTHEIYSQHNLLELP.

An N-acylsphingoid base 1-phosphate contacts are provided by Asp-57, Lys-61, Arg-107, Arg-111, and His-151.

Belongs to the GLTP family.

Its subcellular location is the cytoplasm. It is found in the cytosol. The protein localises to the golgi apparatus. The protein resides in the trans-Golgi network membrane. It localises to the cell membrane. Its subcellular location is the endosome membrane. It is found in the nucleus outer membrane. The catalysed reaction is N-(hexadecanoyl)-sphing-4-enine-1-phosphate(in) = N-(hexadecanoyl)-sphing-4-enine-1-phosphate(out). It carries out the reaction N-(9Z-octadecenoyl)-sphing-4-enine-1-phosphate(in) = N-(9Z-octadecenoyl)-sphing-4-enine-1-phosphate(out). Functionally, mediates the intracellular transfer of ceramide-1-phosphate (C1P) between organelle membranes and the cell membrane. Required for normal structure of the Golgi stacks. Can bind phosphoceramides with a variety of aliphatic chains, but has a preference for lipids with saturated C16:0 or monounsaturated C18:1 aliphatic chains, and is inefficient with phosphoceramides containing lignoceryl (C24:0). Plays a role in the regulation of the cellular levels of ceramide-1-phosphate, and thereby contributes to the regulation of phospholipase PLA2G4A activity and the release of arachidonic acid. Has no activity with galactosylceramide, lactosylceramide, sphingomyelin, phosphatidylcholine, phosphatidic acid and ceramide. C1P transfer is stimulated by phosphatidylserine in C1P source vesicles. Regulates autophagy and pyroptosis, but not apoptosis. The chain is Ceramide-1-phosphate transfer protein (cptp) from Xenopus tropicalis (Western clawed frog).